The primary structure comprises 368 residues: 3-dehydroquinate synthase (368 aa).

Residues 131-132 (TT), K144, and K153 each bind NAD(+). E186, H249, and H267 together coordinate Zn(2+).

Belongs to the sugar phosphate cyclases superfamily. Dehydroquinate synthase family. The cofactor is Co(2+). Requires Zn(2+) as cofactor. It depends on NAD(+) as a cofactor.

The protein resides in the cytoplasm. The enzyme catalyses 7-phospho-2-dehydro-3-deoxy-D-arabino-heptonate = 3-dehydroquinate + phosphate. The protein operates within metabolic intermediate biosynthesis; chorismate biosynthesis; chorismate from D-erythrose 4-phosphate and phosphoenolpyruvate: step 2/7. In terms of biological role, catalyzes the conversion of 3-deoxy-D-arabino-heptulosonate 7-phosphate (DAHP) to dehydroquinate (DHQ). This is 3-dehydroquinate synthase from Pelagibacter ubique (strain HTCC1062).